Reading from the N-terminus, the 117-residue chain is UPF0145 protein CV_4322 (117 aa).

Belongs to the UPF0145 family.

This Chromobacterium violaceum (strain ATCC 12472 / DSM 30191 / JCM 1249 / CCUG 213 / NBRC 12614 / NCIMB 9131 / NCTC 9757 / MK) protein is UPF0145 protein CV_4322.